Reading from the N-terminus, the 418-residue chain is Aspartate aminotransferase 1 (418 aa).

Position 264 is an N6-(pyridoxal phosphate)lysine (lysine 264).

This sequence belongs to the class-I pyridoxal-phosphate-dependent aminotransferase family. In terms of assembly, homodimer. Requires pyridoxal 5'-phosphate as cofactor. In terms of tissue distribution, nodules, roots, stems and leaves, in decreasing order of aspartate aminotransferase 1 concentration. Is the predominant aspartate aminotransferase isoenzyme in roots.

The protein localises to the cytoplasm. It carries out the reaction L-aspartate + 2-oxoglutarate = oxaloacetate + L-glutamate. Its function is as follows. Important for the metabolism of amino acids and Krebs-cycle related organic acids. In plants, it is involved in nitrogen metabolism and in aspects of carbon and energy metabolism. This chain is Aspartate aminotransferase 1 (AAT-1), found in Medicago sativa (Alfalfa).